Reading from the N-terminus, the 280-residue chain is Acetyl-coenzyme A carboxylase carboxyl transferase subunit beta (280 aa).

The CoA carboxyltransferase N-terminal domain occupies 28–280; that stretch reads IMTKCPSCRT…TLTKLLAMHQ (253 aa). Residues cysteine 32, cysteine 35, cysteine 51, and cysteine 54 each contribute to the Zn(2+) site. Residues 32–54 form a C4-type zinc finger; the sequence is CPSCRTIMYTKDLKKNLSVCRTC.

It belongs to the AccD/PCCB family. Acetyl-CoA carboxylase is a heterohexamer composed of biotin carboxyl carrier protein (AccB), biotin carboxylase (AccC) and two subunits each of ACCase subunit alpha (AccA) and ACCase subunit beta (AccD). The cofactor is Zn(2+).

The protein resides in the cytoplasm. The catalysed reaction is N(6)-carboxybiotinyl-L-lysyl-[protein] + acetyl-CoA = N(6)-biotinyl-L-lysyl-[protein] + malonyl-CoA. It participates in lipid metabolism; malonyl-CoA biosynthesis; malonyl-CoA from acetyl-CoA: step 1/1. Functionally, component of the acetyl coenzyme A carboxylase (ACC) complex. Biotin carboxylase (BC) catalyzes the carboxylation of biotin on its carrier protein (BCCP) and then the CO(2) group is transferred by the transcarboxylase to acetyl-CoA to form malonyl-CoA. The sequence is that of Acetyl-coenzyme A carboxylase carboxyl transferase subunit beta from Shouchella clausii (strain KSM-K16) (Alkalihalobacillus clausii).